Consider the following 235-residue polypeptide: UPF0502 protein Bmul_3231/BMULJ_05293 (235 aa).

This sequence belongs to the UPF0502 family.

This chain is UPF0502 protein Bmul_3231/BMULJ_05293, found in Burkholderia multivorans (strain ATCC 17616 / 249).